The following is a 117-amino-acid chain: Ig heavy chain V region J558 (117 aa).

Residues 1–116 (EVQLQQSGPE…WGAGTTVTVS (116 aa)) enclose the Ig-like domain. An intrachain disulfide couples C22 to C96.

In Mus musculus (Mouse), this protein is Ig heavy chain V region J558.